The chain runs to 1334 residues: SCAR-like protein 2 (1334 aa).

The span at 197–207 (KTGNFQREKKS) shows a compositional bias: basic and acidic residues. Disordered stretches follow at residues 197-281 (KTGN…SSFS), 294-331 (DTKPTVVPHENGHDKLSNNNLHKLSNTPLHTRLNGTSA), 481-516 (PDSSVAEFPDAYQNSSMPPAPESAADFPSLSSADAP), 568-602 (PNQSLPDSKEIPDSKAEDAPIDSPEKLEPGPSSYT), 643-668 (DKPTNEVSATNSSPDDTSSDEDTVES), 791-832 (STSH…KNII), 931-956 (FEKKTENDTNGLPKSSLFSSSHYSEK), 1000-1026 (FQLLPGSSVPQLGSGSESEDDTFGRSY), 1248-1268 (SGQQKLNGHEKSKAVGNDTKN), and 1280-1304 (RSKTFNLRRTNASKTNTSSPTTANS). The segment covering 241 to 256 (VQLTSRHFATPSTDGR) has biased composition (polar residues). The segment covering 310 to 319 (SNNNLHKLSN) has biased composition (low complexity). A compositionally biased stretch (polar residues) spans 320–330 (TPLHTRLNGTS). A compositionally biased stretch (basic and acidic residues) spans 574–595 (DSKEIPDSKAEDAPIDSPEKLE). The span at 791 to 823 (STSHSSETNQSTVRTPDTVIGQTEGSTGCSTSF) shows a compositional bias: polar residues. Over residues 945-956 (SSLFSSSHYSEK) the composition is skewed to low complexity. Over residues 1248-1260 (SGQQKLNGHEKSK) the composition is skewed to basic and acidic residues. Positions 1271-1289 (EREELLQQIRSKTFNLRRT) constitute a WH2 domain. Over residues 1289–1304 (TNASKTNTSSPTTANS) the composition is skewed to low complexity.

It belongs to the SCAR/WAVE family.

It is found in the cytoplasm. It localises to the cytoskeleton. Involved in regulation of actin and microtubule organization. Part of a WAVE complex that activates the Arp2/3 complex. The chain is SCAR-like protein 2 from Oryza sativa subsp. japonica (Rice).